The following is a 207-amino-acid chain: Small ribosomal subunit protein uS2 (207 aa).

The protein belongs to the universal ribosomal protein uS2 family.

The protein is Small ribosomal subunit protein uS2 of Methanocella arvoryzae (strain DSM 22066 / NBRC 105507 / MRE50).